Reading from the N-terminus, the 294-residue chain is Nucleotide-binding protein Adeh_0147 (294 aa).

G17–S24 is an ATP binding site. A GTP-binding site is contributed by D68–E71.

This sequence belongs to the RapZ-like family.

Displays ATPase and GTPase activities. This chain is Nucleotide-binding protein Adeh_0147, found in Anaeromyxobacter dehalogenans (strain 2CP-C).